Consider the following 90-residue polypeptide: Protein LIM3 (90 aa).

The first 26 residues, 1–26 (MAAVKFLVCSVLLVVLATQSEIGLAQ), serve as a signal peptide directing secretion. Disulfide bonds link Cys28-Cys65, Cys38-Cys54, Cys55-Cys80, and Cys67-Cys87.

It belongs to the A9/FIL1 family.

Its subcellular location is the secreted. The polypeptide is Protein LIM3 (LIM3) (Lilium longiflorum (Trumpet lily)).